The chain runs to 182 residues: Dipetalodipin (182 aa).

A signal peptide spans 1-18; it reads MKTIIAAIFLGILMHAFA. 3 cysteine pairs are disulfide-bonded: cysteine 21–cysteine 134, cysteine 55–cysteine 181, and cysteine 87–cysteine 103.

It belongs to the calycin superfamily. Triabin family. As to expression, expressed in salivary glands.

Its subcellular location is the secreted. Its function is as follows. Inhibits platelet aggregation, vasoconstriction, and angiogenesis through binding to distinct eicosanoids involved in inflammation (acts as a scavenger), and has a role in inhibiting host innate immunity by impairing platelet-assisted formation of neutrophil extracellular traps (NETs). Inhibits platelet aggregation by collagen (IC(50)=30 nM), thromboxane A2 mimetic (TXA2 mimetic), or arachidonic acid (AA) without affecting aggregation induced by ADP, convulxin (GP6 agonist), PMA, and ristocetin (vWF-dependent platelet agglutinator). Binds with high affinity to TXA2, TXB2, prostaglandine H2 mimetic (PGH2 mimetic), PGD2, PGJ2, and PGF2alpha. Also interacts with 15(S)-hydroxyeicosatetraenoic acid (HETE), being the first calycin/lipocalin described to date to bind to a derivative of 15-lipoxygenase. Binding is not observed to other prostaglandins, leukotrienes, HETEs, lipids, and biogenic amines. It prevents contraction of rat uterus stimulated by PGF2alpha and induces relaxation of aorta previously contracted with TXA2 mimetic. In addition, it inhibits angiogenesis mediated by 15(S)-HETE and does not enhance inhibition of collagen-induced platelet aggregation by SQ29548 (TXA2 antagonist) and indomethacin. Also impairs platelet-assisted formation of neutrophil extracellular traps (NETs). NETs are web-like structures of DNA and proteins that play an important role in killing of pathogens. In addition, NETs are implicated in thrombus formation. In vivo, this protein exhibits antithrombotic activity in two distinct mice models that are highly dependent on platelets. It is noteworthy that it inhibits thrombosis without promoting excessive bleeding. The protein is Dipetalodipin of Dipetalogaster maximus (Blood-sucking bug).